Consider the following 354-residue polypeptide: (R,R)-butanediol dehydrogenase (354 aa).

The Enoyl reductase (ER) domain occupies 10–350 (GDIRIEDIPE…NNESAVKIIV (341 aa)). Residues C37, H71, and E157 each contribute to the Zn(2+) site.

It belongs to the zinc-containing alcohol dehydrogenase family. Requires Zn(2+) as cofactor.

It carries out the reaction (R,R)-butane-2,3-diol + NAD(+) = (R)-acetoin + NADH + H(+). It catalyses the reaction (S)-acetoin + NAD(+) = diacetyl + NADH + H(+). Its function is as follows. NAD-dependent butanediol dehydrogenase which catalyzes the oxidation of (R,R)-butane-2,3-diol to (3R)-acetoin and of meso-butane-2,3-diol to (3S)-acetoin. Preferentially oxidizes (R,R)-butane-2,3-diol, with a catalytic efficiency approximately fourfold higher than with meso-butane-2,3-diol. Shows a very low activity with (S,S)-butane-2,3-diol. Can also catalyze the reduction of (3R/3S)-acetoin and diacetyl in the presence of NADH. This is (R,R)-butanediol dehydrogenase from Neisseria gonorrhoeae (strain ATCC 700825 / FA 1090).